An 885-amino-acid chain; its full sequence is DNA mismatch repair protein MutS (885 aa).

626 to 633 is a binding site for ATP; the sequence is GPNMGGKS.

This sequence belongs to the DNA mismatch repair MutS family.

Functionally, this protein is involved in the repair of mismatches in DNA. It is possible that it carries out the mismatch recognition step. This protein has a weak ATPase activity. The protein is DNA mismatch repair protein MutS of Burkholderia ambifaria (strain MC40-6).